The chain runs to 248 residues: Probable 2-oxo-3-(5-oxofuran-2-ylidene)propanoate lactonase (248 aa).

Active-site residues include Cys-123, Asp-180, and His-212.

The protein belongs to the dienelactone hydrolase family.

The enzyme catalyses 2-oxo-3-(5-oxofuran-2-ylidene)propanoate + H2O = 3-maleylpyruvate + H(+). Functionally, involved in the 5-nitroanthranilic acid (5NAA) degradation. Catalyzes the hydrolysis of the lactone to produce maleylpyruvate biodegradation of 5-nitroanthranilate. The sequence is that of Probable 2-oxo-3-(5-oxofuran-2-ylidene)propanoate lactonase (naaC) from Bradyrhizobium sp.